A 300-amino-acid polypeptide reads, in one-letter code: Geranyl diphosphate 2-C-methyltransferase (300 aa).

A disordered region spans residues 1–24 (MAAASAPVPGPGGASSTARGRIPA).

Belongs to the geranyl diphosphate 2-C-methyltransferase family. Mg(2+) serves as cofactor.

The enzyme catalyses (2E)-geranyl diphosphate + S-adenosyl-L-methionine = (E)-2-methylgeranyl diphosphate + S-adenosyl-L-homocysteine + H(+). Functionally, catalyzes the SAM-dependent methylation of geranyl diphosphate (GPP) to yield (E)-2-methylgeranyl diphosphate (2-MeGPP). The polypeptide is Geranyl diphosphate 2-C-methyltransferase (gdpmt) (Streptomyces lasalocidi (Streptomyces lasaliensis)).